The following is a 209-amino-acid chain: uncharacterized protein (209 aa).

Positions 41–76 (NVENLCLIRNKLKTDIENLLENKIDVENKLLVLRNQ) form a coiled coil.

This is an uncharacterized protein from Acanthamoeba polyphaga (Amoeba).